The sequence spans 253 residues: Small ribosomal subunit protein cS22 (253 aa).

A chloroplast-targeting transit peptide spans 1–56 (MATFLTNVVSIKPTIFSFQSESFTPLHTRVNVFSSKPFPSLAGTFSRSSRTRFIPY). RRM domains are found at residues 76 to 154 (RRVY…ITEK) and 177 to 253 (YKVY…VNKA).

Belongs to the chloroplast-specific ribosomal protein cS22 family. As to quaternary structure, component of the chloroplast small ribosomal subunit (SSU). Mature 70S chloroplast ribosomes of higher plants consist of a small (30S) and a large (50S) subunit. The 30S small subunit contains 1 molecule of ribosomal RNA (16S rRNA) and 24 different proteins. The 50S large subunit contains 3 rRNA molecules (23S, 5S and 4.5S rRNA) and 33 different proteins. As to expression, expressed constitutively in roots, stems, flower buds, flowers and leaves.

It localises to the plastid. It is found in the chloroplast. In terms of biological role, component of the chloroplast ribosome (chloro-ribosome), a dedicated translation machinery responsible for the synthesis of chloroplast genome-encoded proteins, including proteins of the transcription and translation machinery and components of the photosynthetic apparatus. May have a role in the recruitment of stored chloroplast mRNAs for active protein synthesis. Bind single strand DNA (ssDNA) and RNA in vitro. Exhibits RNA chaperone activity. Negatively regulates resistance responses to abiotic stresses during seed germination (e.g. salt, dehydration, and low temperature) and seedling growth (e.g. salt). The polypeptide is Small ribosomal subunit protein cS22 (Arabidopsis thaliana (Mouse-ear cress)).